Here is a 360-residue protein sequence, read N- to C-terminus: Peptide chain release factor 1 (360 aa).

N5-methylglutamine is present on Gln-236. The interval 288–308 (QDEQDAERKSTIGTGDRSERI) is disordered. The span at 293–308 (AERKSTIGTGDRSERI) shows a compositional bias: basic and acidic residues.

This sequence belongs to the prokaryotic/mitochondrial release factor family. Post-translationally, methylated by PrmC. Methylation increases the termination efficiency of RF1.

The protein localises to the cytoplasm. Its function is as follows. Peptide chain release factor 1 directs the termination of translation in response to the peptide chain termination codons UAG and UAA. This chain is Peptide chain release factor 1, found in Streptococcus equi subsp. zooepidemicus (strain H70).